The sequence spans 134 residues: NADH-quinone oxidoreductase subunit A (134 aa).

3 helical membrane-spanning segments follow: residues Phe-12–Leu-32, Phe-64–Trp-84, and Trp-93–Leu-113.

Belongs to the complex I subunit 3 family. In terms of assembly, NDH-1 is composed of 13 different subunits. Subunits NuoA, H, J, K, L, M, N constitute the membrane sector of the complex.

The protein localises to the cell inner membrane. It catalyses the reaction a quinone + NADH + 5 H(+)(in) = a quinol + NAD(+) + 4 H(+)(out). Functionally, NDH-1 shuttles electrons from NADH, via FMN and iron-sulfur (Fe-S) centers, to quinones in the respiratory chain. The immediate electron acceptor for the enzyme in this species is believed to be ubiquinone. Couples the redox reaction to proton translocation (for every two electrons transferred, four hydrogen ions are translocated across the cytoplasmic membrane), and thus conserves the redox energy in a proton gradient. This Shewanella oneidensis (strain ATCC 700550 / JCM 31522 / CIP 106686 / LMG 19005 / NCIMB 14063 / MR-1) protein is NADH-quinone oxidoreductase subunit A.